Consider the following 160-residue polypeptide: uncharacterized protein (160 aa).

An N-terminal signal peptide occupies residues 1–25; the sequence is MKVTLLLLLIAVLLLLLIFMKVCKQ.

This is an uncharacterized protein from Invertebrate iridescent virus 6 (IIV-6).